A 338-amino-acid polypeptide reads, in one-letter code: Glyceraldehyde-3-phosphate dehydrogenase (338 aa).

NAD(+)-binding residues include Arg-13, Ile-14, Asp-35, Arg-80, and Ser-123. The D-glyceraldehyde 3-phosphate site is built by Ser-152, Cys-153, Thr-154, Thr-183, Arg-198, Thr-212, Gly-213, and Arg-235. Cys-153 acts as the Nucleophile in catalysis. Asn-317 provides a ligand contact to NAD(+).

Belongs to the glyceraldehyde-3-phosphate dehydrogenase family. As to quaternary structure, homotetramer.

The protein resides in the tegument membrane. The enzyme catalyses D-glyceraldehyde 3-phosphate + phosphate + NAD(+) = (2R)-3-phospho-glyceroyl phosphate + NADH + H(+). It functions in the pathway carbohydrate degradation; glycolysis; pyruvate from D-glyceraldehyde 3-phosphate: step 1/5. Its function is as follows. This antigen is associated with human resistance to schistosomiasis. The protein is Glyceraldehyde-3-phosphate dehydrogenase of Schistosoma mansoni (Blood fluke).